The primary structure comprises 514 residues: Na(+)/H(+) antiporter NhaB (514 aa).

Helical transmembrane passes span Leu-23–Ala-43, Pro-63–Ala-83, Leu-97–Phe-117, Leu-120–Phe-140, Phe-144–Ile-164, Leu-202–Pro-222, Phe-238–Met-258, Ala-303–Ile-323, Leu-357–Ile-377, Leu-391–Ile-411, Ala-447–Ile-467, and Val-475–Phe-495.

It belongs to the NhaB Na(+)/H(+) (TC 2.A.34) antiporter family.

It is found in the cell inner membrane. The catalysed reaction is 2 Na(+)(in) + 3 H(+)(out) = 2 Na(+)(out) + 3 H(+)(in). Its function is as follows. Na(+)/H(+) antiporter that extrudes sodium in exchange for external protons. The polypeptide is Na(+)/H(+) antiporter NhaB (Salmonella heidelberg (strain SL476)).